Here is a 441-residue protein sequence, read N- to C-terminus: Monodehydroascorbate reductase 3 (441 aa).

Residues 14–17 (GGVA), E41, R48, K53, I96, and 147–148 (RE) contribute to the FAD site. NAD(+)-binding positions include 173–179 (GGFLGLE), E197, R203, and G262. Residue 175 to 179 (FLGLE) participates in NADP(+) binding. Positions 203 and 262 each coordinate NADP(+). D299 contributes to the FAD binding site. 315–316 (EH) is an NAD(+) binding site. An NADP(+)-binding site is contributed by 315–316 (EH). An L-ascorbate-binding site is contributed by R321. FAD is bound at residue Y350. Position 350 (Y350) interacts with NAD(+). An NADP(+)-binding site is contributed by Y350. R352 is a binding site for L-ascorbate. Phosphoserine is present on S418.

It belongs to the FAD-dependent oxidoreductase family. The cofactor is FAD.

The protein localises to the cytoplasm. The catalysed reaction is 2 monodehydro-L-ascorbate radical + NADH + H(+) = 2 L-ascorbate + NAD(+). Catalyzes the conversion of monodehydroascorbate to ascorbate, oxidizing NADH in the process. Required for producing sufficient ascorbate to maintain the interaction between Piriformospora indica and Arabidopsis in a mutualistic state. The polypeptide is Monodehydroascorbate reductase 3 (Arabidopsis thaliana (Mouse-ear cress)).